A 373-amino-acid polypeptide reads, in one-letter code: ATP phosphoribosyltransferase regulatory subunit (373 aa).

The protein belongs to the class-II aminoacyl-tRNA synthetase family. HisZ subfamily. As to quaternary structure, heteromultimer composed of HisG and HisZ subunits.

The protein resides in the cytoplasm. Its pathway is amino-acid biosynthesis; L-histidine biosynthesis; L-histidine from 5-phospho-alpha-D-ribose 1-diphosphate: step 1/9. Its function is as follows. Required for the first step of histidine biosynthesis. May allow the feedback regulation of ATP phosphoribosyltransferase activity by histidine. In Rhizobium etli (strain CIAT 652), this protein is ATP phosphoribosyltransferase regulatory subunit.